The primary structure comprises 71 residues: MQKLNKHLKKKKQKRKKMKKKLNNEFQEVIDFLKSLPEGRRVYIEMSGIWIEVTKEEAINYLKSKINEKEA.

The tract at residues 1-20 is disordered; it reads MQKLNKHLKKKKQKRKKMKK.

This is an uncharacterized protein from Methanocaldococcus jannaschii (strain ATCC 43067 / DSM 2661 / JAL-1 / JCM 10045 / NBRC 100440) (Methanococcus jannaschii).